Reading from the N-terminus, the 808-residue chain is Probable potassium transporter 3 (808 aa).

Residues 1–34 (MPVADCESGLSPADVTGAGAANGNPGHWRSYYRH) are Cytoplasmic-facing. A helical membrane pass occupies residues 35–55 (VLLLAYQSCGVVYGDLSTSPL). The Extracellular segment spans residues 56-81 (YVYKSTFIIGSLRRFQDEEIVFGVFS). The chain crosses the membrane as a helical span at residues 82 to 102 (LVFWTLTLIPLLKYVFIVLAA). The Cytoplasmic segment spans residues 103 to 167 (DDNGEGGTFA…FLENHRKSRT (65 aa)). Residues 168 to 188 (FLLVTVLFGASLVIGDGVLTP) form a helical membrane-spanning segment. Residues 189 to 204 (PMSVLSSFSGLQVHST) are Extracellular-facing. A helical transmembrane segment spans residues 205–225 (ALTSGEVEILSCTVLVCLFMV). Residues 226–232 (QHWGTHR) lie on the Cytoplasmic side of the membrane. A helical membrane pass occupies residues 233-253 (VAFLFAPVVIVWLLLLGALGV). Residues 254–283 (YNIVVWNPRVLRALSPYYLVRFFQHTGKDG) are Extracellular-facing. The chain crosses the membrane as a helical span at residues 284–304 (WISLGGILLSMTGTEAMYADL). Over 305-313 (GHFTAASIR) the chain is Cytoplasmic. Residues 314-334 (VAFVGLIYPCLVLQYMGQAAF) traverse the membrane as a helical segment. Over 335-354 (LSKSPHCDIHFVFFESIPTG) the chain is Extracellular. Residues 355–375 (IFWPVLVIATLAAIVGSQAVI) form a helical membrane-spanning segment. Residues 376-406 (SATFSIVRQCTALGCFPRVKIVHTSRRIHGQ) are Cytoplasmic-facing. Residues 407 to 427 (IYSPEINWILMLLCIAVTMGL) traverse the membrane as a helical segment. Topologically, residues 428 to 439 (RDTTLIGNAYGM) are extracellular. A helical transmembrane segment spans residues 440–460 (ACAGVMLVTTLLMALVIVFVW). Residues 461–464 (QYSC) lie on the Cytoplasmic side of the membrane. A helical transmembrane segment spans residues 465 to 485 (LVAALFLVAFGVVEAVYLSAA). The Extracellular segment spans residues 486–491 (LMKVPQ). Residues 492-512 (GGWLPLVLSLVFVAVMYVWHY) form a helical membrane-spanning segment. Topologically, residues 513–808 (GTRRKHQFDV…LIEVGMIYYV (296 aa)) are cytoplasmic.

The protein belongs to the HAK/KUP transporter (TC 2.A.72.3) family.

The protein resides in the membrane. Its function is as follows. High-affinity potassium transporter. This Oryza sativa subsp. japonica (Rice) protein is Probable potassium transporter 3 (HAK3).